The primary structure comprises 99 residues: Plastocyanin (99 aa).

Residues 1-99 form the Plastocyanin-like domain; sequence IEVLLGGGDG…AGMVGKVTVN (99 aa). Cu cation-binding residues include His-37, Cys-84, His-87, and Met-92.

This sequence belongs to the plastocyanin family. The cofactor is Cu(2+).

Its subcellular location is the plastid. It localises to the chloroplast thylakoid membrane. Its function is as follows. Participates in electron transfer between P700 and the cytochrome b6-f complex in photosystem I. The chain is Plastocyanin (PETE) from Capsella bursa-pastoris (Shepherd's purse).